The chain runs to 870 residues: Lysosomal cholesterol signaling protein (870 aa).

The Lumenal portion of the chain corresponds to 1 to 38 (MNSNLPAENLTIAVNMTKTLPTAVTHGFNSTNDPPSMS). The PIN-like transporter stretch occupies residues 1-370 (MNSNLPAENL…SAWLLTFPTM (370 aa)). 3 N-linked (GlcNAc...) asparagine glycosylation sites follow: asparagine 9, asparagine 15, and asparagine 29. Residues 39–59 (ITRLFPALLECFGIVLCGYIA) form a helical membrane-spanning segment. Cholesterol is bound by residues phenylalanine 43 and tyrosine 57. The Cytoplasmic portion of the chain corresponds to 60-79 (GRANVITSTQAKGLGNFVSR). A helical membrane pass occupies residues 80–100 (FALPALLFKNMVVLNFSNVDW). Residues 101-104 (SFLY) are Lumenal-facing. Residues 105-125 (SILIAKASVFFIVCVLTLLVA) traverse the membrane as a helical segment. Over 126–133 (SPDSRFSK) the chain is Cytoplasmic. Residues 134 to 154 (AGLFPIFATQSNDFALGYPIV) form a discontinuously helical membrane-spanning segment. The Lumenal portion of the chain corresponds to 155 to 167 (EALYQTTYPEYLQ). Residues 168–188 (YIYLVAPISLMMLNPIGFIFC) form a helical membrane-spanning segment. The Cytoplasmic portion of the chain corresponds to 189–213 (EIQKWKDTQNASQNKIKIVGLGLLR). Residues 214-234 (VLQNPIVFMVFIGIAFNFILD) form a discontinuously helical membrane-spanning segment. The Lumenal portion of the chain corresponds to 235–243 (RKVPVYVEN). The discontinuously helical transmembrane segment at 244–264 (FLDGLGNSFSGSALFYLGLTM) threads the bilayer. Over 265–273 (VGKIKRLKK) the chain is Cytoplasmic. Residues glycine 266, lysine 267, and isoleucine 268 each coordinate cholesterol. The helical transmembrane segment at 274 to 294 (SAFVVLILLITAKLLVLPLLC) threads the bilayer. Residues 295-315 (REMVELLDKGDSVVNHTSLSN) are Lumenal-facing. An N-linked (GlcNAc...) asparagine glycan is attached at asparagine 309. The discontinuously helical transmembrane segment at 316–336 (YAFLYGVFPVAPGVAIFATQF) threads the bilayer. At 337–346 (NMEVEIITSG) the chain is on the cytoplasmic side. Residues 347-367 (MVISTFVSAPIMYVSAWLLTF) form a helical membrane-spanning segment. The Lumenal segment spans residues 368-381 (PTMDPKPLAYAIQN). Positions 380–717 (QNVSFDISIV…FGIFGLDKHL (338 aa)) are GPCR. An N-linked (GlcNAc...) asparagine glycan is attached at asparagine 381. The helical transmembrane segment at 382–402 (VSFDISIVSLISLIWSLAILL) threads the bilayer. Residues 403–414 (LSKKYKQLPHML) are Cytoplasmic-facing. Residues 415 to 435 (TTNLLIAQSIVCAGMMIWNFV) traverse the membrane as a helical segment. Residues 436–438 (KEK) are Lumenal-facing. A helical transmembrane segment spans residues 439–459 (NFVGQILVFVLLYSSLYSTYL). Residues 460 to 480 (WTGLLAISLFLLKKRERVQIP) are Cytoplasmic-facing. A helical membrane pass occupies residues 481 to 501 (VGIIIISGWGIPALLVGVLLI). Residues 502–520 (TGKHNGDSIDSAFFYGKEQ) lie on the Lumenal side of the membrane. A helical membrane pass occupies residues 521–541 (MITTAVTLFCSILIAGISLMC). The Cytoplasmic segment spans residues 542–660 (MNQTAQAGSY…GDQQLTRHVL (119 aa)). Arginine 657 is a binding site for cholesterol. A helical transmembrane segment spans residues 661–681 (LCLLLIIGLFANLSSCLWWLF). The Lumenal segment spans residues 682 to 691 (NQEPGRLYVE). A helical transmembrane segment spans residues 692 to 712 (LQFFCAVFNFGQGFISFGIFG). Topologically, residues 713-870 (LDKHLIILPF…SSPPSHSPKT (158 aa)) are cytoplasmic. One can recognise a DEP domain in the interval 757 to 835 (YHRDLCIRNI…DEYLFYRFLQ (79 aa)).

As to quaternary structure, homodimer; via the transporter region and DEP domain. Interacts with the GATOR1 complex and prevents interaction between GATOR1 and KICSTOR; this interaction is disrupted upon cholesterol starvation.

It localises to the lysosome membrane. Its function is as follows. Cholesterol-binding protein that acts as a regulator of mTORC1 signaling pathway. Acts as a sensor of cholesterol to signal cholesterol sufficiency to mTORC1: in presence of cholesterol, binds cholesterol, leading to disruption of the interaction between the GATOR1 and KICSTOR complexes and promotion of mTORC1 signaling. Upon cholesterol starvation, GPR155/LYCHOS is unable to perturb the association between GATOR1 and KICSTOR, leading to mTORC1 signaling inhibition. Binds indole-3-acetic acid and may play a role in tryptophan metabolism. The polypeptide is Lysosomal cholesterol signaling protein (Homo sapiens (Human)).